The chain runs to 424 residues: UDP-N-acetylglucosamine 1-carboxyvinyltransferase (424 aa).

22 to 23 (KN) lines the phosphoenolpyruvate pocket. Position 98 (Arg-98) interacts with UDP-N-acetyl-alpha-D-glucosamine. Residue Cys-122 is the Proton donor of the active site. Position 122 is a 2-(S-cysteinyl)pyruvic acid O-phosphothioketal (Cys-122). UDP-N-acetyl-alpha-D-glucosamine-binding positions include 127–131 (RPVDQ), Asp-312, and Ile-334.

Belongs to the EPSP synthase family. MurA subfamily.

It localises to the cytoplasm. The catalysed reaction is phosphoenolpyruvate + UDP-N-acetyl-alpha-D-glucosamine = UDP-N-acetyl-3-O-(1-carboxyvinyl)-alpha-D-glucosamine + phosphate. The protein operates within cell wall biogenesis; peptidoglycan biosynthesis. Cell wall formation. Adds enolpyruvyl to UDP-N-acetylglucosamine. In Xanthomonas campestris pv. campestris (strain 8004), this protein is UDP-N-acetylglucosamine 1-carboxyvinyltransferase.